Consider the following 88-residue polypeptide: Small ribosomal subunit protein uS15c (88 aa).

Belongs to the universal ribosomal protein uS15 family. In terms of assembly, part of the 30S ribosomal subunit.

The protein localises to the plastid. It is found in the chloroplast. The protein is Small ribosomal subunit protein uS15c (rps15) of Aethionema grandiflorum (Persian stone-cress).